Here is an 81-residue protein sequence, read N- to C-terminus: ATP synthase subunit c (81 aa).

A run of 2 helical transmembrane segments spans residues proline 3–glycine 23 and leucine 57–alanine 77.

The protein belongs to the ATPase C chain family. In terms of assembly, F-type ATPases have 2 components, F(1) - the catalytic core - and F(0) - the membrane proton channel. F(1) has five subunits: alpha(3), beta(3), gamma(1), delta(1), epsilon(1). F(0) has four main subunits: a(1), b(1), b'(1) and c(10-14). The alpha and beta chains form an alternating ring which encloses part of the gamma chain. F(1) is attached to F(0) by a central stalk formed by the gamma and epsilon chains, while a peripheral stalk is formed by the delta, b and b' chains.

It is found in the cellular thylakoid membrane. Its function is as follows. F(1)F(0) ATP synthase produces ATP from ADP in the presence of a proton or sodium gradient. F-type ATPases consist of two structural domains, F(1) containing the extramembraneous catalytic core and F(0) containing the membrane proton channel, linked together by a central stalk and a peripheral stalk. During catalysis, ATP synthesis in the catalytic domain of F(1) is coupled via a rotary mechanism of the central stalk subunits to proton translocation. Functionally, key component of the F(0) channel; it plays a direct role in translocation across the membrane. A homomeric c-ring of between 10-14 subunits forms the central stalk rotor element with the F(1) delta and epsilon subunits. The protein is ATP synthase subunit c of Trichodesmium erythraeum (strain IMS101).